Here is a 207-residue protein sequence, read N- to C-terminus: Outer-membrane lipoprotein LolB (207 aa).

The first 21 residues, 1–21 (MPTNTVRCLRLLPLASVLLAA), serve as a signal peptide directing secretion. A lipid anchor (N-palmitoyl cysteine) is attached at Cys22. Residue Cys22 is the site of S-diacylglycerol cysteine attachment.

Belongs to the LolB family. In terms of assembly, monomer.

The protein resides in the cell outer membrane. Functionally, plays a critical role in the incorporation of lipoproteins in the outer membrane after they are released by the LolA protein. The protein is Outer-membrane lipoprotein LolB of Pectobacterium carotovorum subsp. carotovorum (strain PC1).